A 61-amino-acid polypeptide reads, in one-letter code: Small ribosomal subunit protein uS14 (61 aa).

Residues cysteine 24, cysteine 27, cysteine 40, and cysteine 43 each contribute to the Zn(2+) site.

It belongs to the universal ribosomal protein uS14 family. Zinc-binding uS14 subfamily. In terms of assembly, part of the 30S ribosomal subunit. Contacts proteins S3 and S10. It depends on Zn(2+) as a cofactor.

In terms of biological role, binds 16S rRNA, required for the assembly of 30S particles and may also be responsible for determining the conformation of the 16S rRNA at the A site. This chain is Small ribosomal subunit protein uS14, found in Campylobacter concisus (strain 13826).